A 219-amino-acid polypeptide reads, in one-letter code: uncharacterized protein (219 aa).

Asp-58 is a catalytic residue.

It belongs to the pseudouridine synthase RluA family.

It carries out the reaction a uridine in RNA = a pseudouridine in RNA. This is an uncharacterized protein from Zymomonas mobilis subsp. mobilis (strain ATCC 31821 / ZM4 / CP4).